The primary structure comprises 444 residues: U4/U6 snRNA-associated-splicing factor PRP24 (444 aa).

Basic and acidic residues predominate over residues 1 to 16 (MEYGHHARPDSKRPLD). The tract at residues 1-29 (MEYGHHARPDSKRPLDEGSPAAAGLTSKK) is disordered. Ser-19 is subject to Phosphoserine. RRM domains follow at residues 41–116 (TTVL…HLTE), 117–195 (CTLW…VSNP), and 210–289 (REIM…LADK).

In terms of assembly, monomer. Interacts with U6 snRNA SNR6 and the LSM2-8 complex (small nuclear RNA); to chaperone formation of the U4/U6-U5 tri-snRNP (small nuclear ribonucleoprotein) assembly, the protein is displaced from the U4/U6 snRNP once pairing is complete.

Its subcellular location is the nucleus. In terms of biological role, functions as a recycling factor of the spliceosome, a machinery that forms on each precursor-messenger RNA (pre-mRNA) and catalyzes the removal of introns. Chaperones the re-annealing of U4 and U6 snRNAs (small nuclear RNAs) released from previous rounds of splicing, an initial step in reforming the U4/U6-U5 tri-snRNP (small nuclear ribonucleoprotein) that can reassemble into another spliceosome complex; this step involves binding U6 and facilitating the unwinding of the U6 internal stem loop, followed by base-pairing of U6 to U4. This chain is U4/U6 snRNA-associated-splicing factor PRP24 (PRP24), found in Saccharomyces cerevisiae (strain ATCC 204508 / S288c) (Baker's yeast).